The chain runs to 330 residues: Succinylglutamate desuccinylase (330 aa).

Zn(2+) contacts are provided by histidine 53, glutamate 56, and histidine 147. Glutamate 210 is an active-site residue.

Belongs to the AspA/AstE family. Succinylglutamate desuccinylase subfamily. It depends on Zn(2+) as a cofactor.

It catalyses the reaction N-succinyl-L-glutamate + H2O = L-glutamate + succinate. It functions in the pathway amino-acid degradation; L-arginine degradation via AST pathway; L-glutamate and succinate from L-arginine: step 5/5. Transforms N(2)-succinylglutamate into succinate and glutamate. This Yersinia enterocolitica serotype O:8 / biotype 1B (strain NCTC 13174 / 8081) protein is Succinylglutamate desuccinylase.